The chain runs to 380 residues: Protein Wnt-5a (380 aa).

Positions 1–40 (MRKNLWTFQFGGEASGLVGSAMVSQHFVVLLMSLYCLTQS) are cleaved as a signal peptide. Residues Cys104 and Cys115 are joined by a disulfide bond. N-linked (GlcNAc...) asparagine glycans are attached at residues Asn114 and Asn120. Cystine bridges form between Cys154–Cys162, Cys164–Cys182, Cys238–Cys252, Cys240–Cys247, Cys309–Cys340, Cys325–Cys335, Cys339–Cys379, Cys355–Cys370, Cys357–Cys367, and Cys362–Cys363. A lipid anchor (O-palmitoleoyl serine; by PORCN) is attached at Ser244. 2 N-linked (GlcNAc...) asparagine glycosylation sites follow: Asn312 and Asn326.

It belongs to the Wnt family. Palmitoleoylation is required for efficient binding to frizzled receptors. Depalmitoleoylation leads to Wnt signaling pathway inhibition. In terms of tissue distribution, found primarily in ectoderm with lower levels of expression in mesoderm. Detected in the head and tail with lower expression in the middle of the embryo. No expression was found in the notochord.

The protein resides in the secreted. Its subcellular location is the extracellular space. The protein localises to the extracellular matrix. Functionally, ligand for members of the frizzled family of seven transmembrane receptors. Can activate or inhibit canonical Wnt signaling, depending on receptor context. Plays a role in normal embryonic development. This is Protein Wnt-5a (wnt5a) from Xenopus laevis (African clawed frog).